Consider the following 122-residue polypeptide: MAKPSKKNRTHEKRKVRVRKKLFGTQDRPRLSVFRSAKHIYAQVIIDETGQTIAGASTLDKEAKDKGGFESKVEAAKFVGKLVAQRAKEKGVTKVVFDRNGFLYHGRVKAVSTGARDGGLEF.

The protein belongs to the universal ribosomal protein uL18 family. Part of the 50S ribosomal subunit; part of the 5S rRNA/L5/L18/L25 subcomplex. Contacts the 5S and 23S rRNAs.

Its function is as follows. This is one of the proteins that bind and probably mediate the attachment of the 5S RNA into the large ribosomal subunit, where it forms part of the central protuberance. The polypeptide is Large ribosomal subunit protein uL18 (Desulfatibacillum aliphaticivorans).